A 195-amino-acid polypeptide reads, in one-letter code: MYIVLEGIDGVGKTTQTEKLKEWLEKRGFSVKTIVEPTDSDIGKIIREELLKPEATSDTNQQMLALLFAADRLTLKDEINQVKNNQQKILISDRSFYSSITYQNSTTIEPEWIYKINKHTPRPDLTIILDIDEDEALKRCDKIDTFENKEFLEKTRENYLKLVKTEKNIVKIDATPTEDVVQDEIRNQIIKYLKL.

G7 to T14 provides a ligand contact to ATP.

This sequence belongs to the thymidylate kinase family.

The catalysed reaction is dTMP + ATP = dTDP + ADP. The polypeptide is Probable thymidylate kinase (Methanosphaera stadtmanae (strain ATCC 43021 / DSM 3091 / JCM 11832 / MCB-3)).